The following is a 465-amino-acid chain: MASNVRTRFAPSPTGYLHIGGARTALFSWAFARRHGGTFILRIEDTDVARSTPAAVQAILDGMSWLGLDADEGPFYQMQRMDRYKAVIREMLAAGSAYHCYASTEELDRMREEQRARGEKPRYDGRWRPEPGKVLPAMPAGVEPVVRFRNPVEGVVAWDDLVKGRIEIANAELDDLVIARADGTPTYNFCVVVDDCDMGITHVIRGDDHVNNTPRQINILRALGAEVPLYAHLSMILGDDGTKLSKRHGAVSVMQYFDDGYLPEAVINYLARLGWSHGDDEIFTREQFVTWFDLDHITPSAAQFNTEKLNWLNAHYIKHSDDARLAADVASRLARRGVDPEAGPRLESVVALYKERVANLNELADAAELYCVAVHPSDELLAQHLTDAGRAALASLKARLADVAWEKPGLNQAIKDTMAEHSLKMPQVAIPLRVATLGVAQTPAIDAVLEVLGRERVLMRIGRYI.

The 'HIGH' region motif lies at 11–21 (PSPTGYLHIGG). Positions 243-247 (KLSKR) match the 'KMSKS' region motif. Lys246 provides a ligand contact to ATP.

This sequence belongs to the class-I aminoacyl-tRNA synthetase family. Glutamate--tRNA ligase type 1 subfamily. In terms of assembly, monomer.

Its subcellular location is the cytoplasm. The enzyme catalyses tRNA(Glu) + L-glutamate + ATP = L-glutamyl-tRNA(Glu) + AMP + diphosphate. Catalyzes the attachment of glutamate to tRNA(Glu) in a two-step reaction: glutamate is first activated by ATP to form Glu-AMP and then transferred to the acceptor end of tRNA(Glu). This Aromatoleum aromaticum (strain DSM 19018 / LMG 30748 / EbN1) (Azoarcus sp. (strain EbN1)) protein is Glutamate--tRNA ligase.